A 153-amino-acid polypeptide reads, in one-letter code: 3-hydroxyacyl-[acyl-carrier-protein] dehydratase FabZ (153 aa).

The active site involves His-54.

It belongs to the thioester dehydratase family. FabZ subfamily.

The protein localises to the cytoplasm. The enzyme catalyses a (3R)-hydroxyacyl-[ACP] = a (2E)-enoyl-[ACP] + H2O. Its function is as follows. Involved in unsaturated fatty acids biosynthesis. Catalyzes the dehydration of short chain beta-hydroxyacyl-ACPs and long chain saturated and unsaturated beta-hydroxyacyl-ACPs. This Shewanella amazonensis (strain ATCC BAA-1098 / SB2B) protein is 3-hydroxyacyl-[acyl-carrier-protein] dehydratase FabZ.